The chain runs to 429 residues: Serine hydroxymethyltransferase (429 aa).

Residues L126 and 130–132 (GHL) contribute to the (6S)-5,6,7,8-tetrahydrofolate site. Residue K235 is modified to N6-(pyridoxal phosphate)lysine.

The protein belongs to the SHMT family. Homodimer. The cofactor is pyridoxal 5'-phosphate.

It localises to the cytoplasm. The enzyme catalyses (6R)-5,10-methylene-5,6,7,8-tetrahydrofolate + glycine + H2O = (6S)-5,6,7,8-tetrahydrofolate + L-serine. Its pathway is one-carbon metabolism; tetrahydrofolate interconversion. It functions in the pathway amino-acid biosynthesis; glycine biosynthesis; glycine from L-serine: step 1/1. Catalyzes the reversible interconversion of serine and glycine with tetrahydrofolate (THF) serving as the one-carbon carrier. This reaction serves as the major source of one-carbon groups required for the biosynthesis of purines, thymidylate, methionine, and other important biomolecules. Also exhibits THF-independent aldolase activity toward beta-hydroxyamino acids, producing glycine and aldehydes, via a retro-aldol mechanism. In Zymomonas mobilis subsp. mobilis (strain ATCC 31821 / ZM4 / CP4), this protein is Serine hydroxymethyltransferase.